The sequence spans 597 residues: Putative lipase ATG15 (597 aa).

At 1–15 (MTLEKNRHANKGTSW) the chain is on the cytoplasmic side. A helical; Signal-anchor for type II membrane protein transmembrane segment spans residues 16 to 36 (TWMIYKFVVGVITVAILVLFI). Residues 37–597 (TQKSVSQAQD…DDDEDTFERK (561 aa)) lie on the Lumenal side of the membrane. 3 N-linked (GlcNAc...) asparagine glycosylation sites follow: Asn195, Asn262, and Asn346. The active-site Charge relay system is Ser364. N-linked (GlcNAc...) asparagine glycosylation occurs at Asn481. The interval 507–570 (EKDEPKLPNP…PTDQDPPKKC (64 aa)) is disordered. Low complexity predominate over residues 519-554 (SSSKSTLSTKTTSLKSSSTYSGSTSSSTVTKTTQTS).

It belongs to the AB hydrolase superfamily. Lipase family. As to quaternary structure, binds to both phosphatidylinositol (PI) and phosphatidylinositol 3,5-bisphosphate (PIP2).

Its subcellular location is the endosome. It is found in the multivesicular body membrane. The protein localises to the prevacuolar compartment membrane. The catalysed reaction is a triacylglycerol + H2O = a diacylglycerol + a fatty acid + H(+). Functionally, lipase which is essential for lysis of subvacuolar cytoplasm to vacuole targeted bodies and intravacuolar autophagic bodies. Involved in the lysis of intravacuolar multivesicular body (MVB) vesicles. The intravacuolar membrane disintegration by ATG15 is critical to life span extension. This Candida albicans (strain SC5314 / ATCC MYA-2876) (Yeast) protein is Putative lipase ATG15 (ATG15).